We begin with the raw amino-acid sequence, 210 residues long: Imidazole glycerol phosphate synthase subunit HisH (210 aa).

Positions 3-210 constitute a Glutamine amidotransferase type-1 domain; sequence KVALLDYGSG…QLLRNWIDLL (208 aa). The active-site Nucleophile is Cys-81. Catalysis depends on residues His-191 and Glu-193.

As to quaternary structure, heterodimer of HisH and HisF.

Its subcellular location is the cytoplasm. It carries out the reaction 5-[(5-phospho-1-deoxy-D-ribulos-1-ylimino)methylamino]-1-(5-phospho-beta-D-ribosyl)imidazole-4-carboxamide + L-glutamine = D-erythro-1-(imidazol-4-yl)glycerol 3-phosphate + 5-amino-1-(5-phospho-beta-D-ribosyl)imidazole-4-carboxamide + L-glutamate + H(+). The catalysed reaction is L-glutamine + H2O = L-glutamate + NH4(+). It functions in the pathway amino-acid biosynthesis; L-histidine biosynthesis; L-histidine from 5-phospho-alpha-D-ribose 1-diphosphate: step 5/9. Its function is as follows. IGPS catalyzes the conversion of PRFAR and glutamine to IGP, AICAR and glutamate. The HisH subunit catalyzes the hydrolysis of glutamine to glutamate and ammonia as part of the synthesis of IGP and AICAR. The resulting ammonia molecule is channeled to the active site of HisF. This chain is Imidazole glycerol phosphate synthase subunit HisH, found in Corynebacterium diphtheriae (strain ATCC 700971 / NCTC 13129 / Biotype gravis).